We begin with the raw amino-acid sequence, 256 residues long: Tumor necrosis factor receptor superfamily member 9 (256 aa).

A signal peptide spans 1 to 23 (MGNNCYNVVVIVLLLVGCEKVGA). 4 TNFR-Cys repeats span residues 24–45 (VQNS…PVCK), 46–85 (SCPP…NAEC), 86–117 (ECIE…QGCK), and 118–159 (TCSL…VVCG). Over 24–187 (VQNSCDNCQP…GPGGHSLQVL (164 aa)) the chain is Extracellular. 9 disulfides stabilise this stretch: C28/C37, C31/C44, C47/C61, C64/C77, C67/C85, C87/C93, C98/C105, C101/C116, and C119/C133. N128 and N138 each carry an N-linked (GlcNAc...) asparagine glycan. C139 and C158 are joined by a disulfide. The helical transmembrane segment at 188 to 208 (TLFLALTSALLLALIFITLLF) threads the bilayer. Topologically, residues 209–256 (SVLKWIRKKFPHIFKQPFKKTTGAAQEEDACSCRCPQEEEGGGGGYEL) are cytoplasmic.

In terms of assembly, predominantly homodimeric, but may also exist as a monomer. Associates with p56-LCK. Interacts with TRAF1, TRAF2 and TRAF3. As to expression, expressed in activated thymocytes, splenic T cells, CD4(+), and CD8(+) T-cells.

It localises to the cell membrane. Its function is as follows. Receptor for TNFSF9/4-1BBL. Conveys a signal that enhances CD8(+) T-cell survival, cytotoxicity, and mitochondrial activity, thereby promoting immunity against viruses and tumors. This is Tumor necrosis factor receptor superfamily member 9 (Tnfrsf9) from Mus musculus (Mouse).